Here is a 332-residue protein sequence, read N- to C-terminus: rRNA biogenesis protein rrp-36 (332 aa).

4 disordered regions span residues 1–91 (MPAV…ASQL), 104–196 (GALK…SGKS), 243–262 (SMES…ELLS), and 312–332 (KKIA…AEDR). Acidic residues-rich tracts occupy residues 27–45 (EPDS…EEEG), 53–77 (DTEE…DSDA), and 117–127 (EDGSDDDEEKE). 2 stretches are compositionally biased toward basic and acidic residues: residues 128-142 (EPNW…MKAK) and 165-183 (RRRD…RDPR). Positions 212-274 (DYQEDEMKQL…KKKEKELIKQ (63 aa)) form a coiled coil. A compositionally biased stretch (basic and acidic residues) spans 315 to 332 (AGKEKKALPLARRTAEDR).

Belongs to the RRP36 family. Associates with 90S and pre-40S pre-ribosomal particles.

The protein localises to the nucleus. It localises to the nucleolus. Its function is as follows. Component of the 90S pre-ribosome involved in the maturation of rRNAs. Required for early cleavages of the pre-RNAs in the 40S ribosomal subunit maturation pathway. The protein is rRNA biogenesis protein rrp-36 (rrp-36) of Neurospora crassa (strain ATCC 24698 / 74-OR23-1A / CBS 708.71 / DSM 1257 / FGSC 987).